Reading from the N-terminus, the 134-residue chain is uncharacterized protein (134 aa).

This is an uncharacterized protein from Archaeoglobus fulgidus (strain ATCC 49558 / DSM 4304 / JCM 9628 / NBRC 100126 / VC-16).